The primary structure comprises 693 residues: Phosphoribosylformylglycinamidine synthase subunit PurL (693 aa).

Residue His-34 is part of the active site. ATP contacts are provided by Tyr-37 and Lys-76. Glu-78 contributes to the Mg(2+) binding site. Substrate contacts are provided by residues 79–82 (SHNH) and Arg-101. Catalysis depends on His-80, which acts as the Proton acceptor. Asp-102 lines the Mg(2+) pocket. Residue Gln-222 coordinates substrate. A Mg(2+)-binding site is contributed by Asp-248. 292–294 (ETQ) contributes to the substrate binding site. Asp-470 and Gly-507 together coordinate ATP. Position 510 (Ser-510) interacts with substrate.

It belongs to the FGAMS family. Monomer. Part of the FGAM synthase complex composed of 1 PurL, 1 PurQ and 2 PurS subunits.

It localises to the cytoplasm. The enzyme catalyses N(2)-formyl-N(1)-(5-phospho-beta-D-ribosyl)glycinamide + L-glutamine + ATP + H2O = 2-formamido-N(1)-(5-O-phospho-beta-D-ribosyl)acetamidine + L-glutamate + ADP + phosphate + H(+). It participates in purine metabolism; IMP biosynthesis via de novo pathway; 5-amino-1-(5-phospho-D-ribosyl)imidazole from N(2)-formyl-N(1)-(5-phospho-D-ribosyl)glycinamide: step 1/2. Part of the phosphoribosylformylglycinamidine synthase complex involved in the purines biosynthetic pathway. Catalyzes the ATP-dependent conversion of formylglycinamide ribonucleotide (FGAR) and glutamine to yield formylglycinamidine ribonucleotide (FGAM) and glutamate. The FGAM synthase complex is composed of three subunits. PurQ produces an ammonia molecule by converting glutamine to glutamate. PurL transfers the ammonia molecule to FGAR to form FGAM in an ATP-dependent manner. PurS interacts with PurQ and PurL and is thought to assist in the transfer of the ammonia molecule from PurQ to PurL. The chain is Phosphoribosylformylglycinamidine synthase subunit PurL from Pyrobaculum calidifontis (strain DSM 21063 / JCM 11548 / VA1).